A 595-amino-acid chain; its full sequence is Glutamyl-tRNA(Gln) amidotransferase subunit B, mitochondrial (595 aa).

The transit peptide at 1–114 (MPRLWYSRYL…RAPTSTVAEP (114 aa)) directs the protein to the mitochondrion. Residues 59 to 78 (KEEAKRSKSQSRNGRGKKQV) are disordered.

Belongs to the GatB/GatE family. GatB subfamily. Subunit of the heterotrimeric GatCAB amidotransferase (AdT) complex, composed of A, B and C subunits.

The protein localises to the mitochondrion. The catalysed reaction is L-glutamyl-tRNA(Gln) + L-glutamine + ATP + H2O = L-glutaminyl-tRNA(Gln) + L-glutamate + ADP + phosphate + H(+). In terms of biological role, allows the formation of correctly charged Gln-tRNA(Gln) through the transamidation of misacylated Glu-tRNA(Gln) in the mitochondria. The reaction takes place in the presence of glutamine and ATP through an activated gamma-phospho-Glu-tRNA(Gln). The sequence is that of Glutamyl-tRNA(Gln) amidotransferase subunit B, mitochondrial from Talaromyces stipitatus (strain ATCC 10500 / CBS 375.48 / QM 6759 / NRRL 1006) (Penicillium stipitatum).